Here is a 30-residue protein sequence, read N- to C-terminus: Neurotoxin II.22.5 (30 aa).

The LCN-type CS-alpha/beta domain occupies 1-30 (KEGYIVNYHTGCKYTCAKLGDNDYCLRECK).

The protein belongs to the long (4 C-C) scorpion toxin superfamily. Sodium channel inhibitor family. Beta subfamily. As to expression, expressed by the venom gland.

It localises to the secreted. Functionally, binds to sodium channels (Nav) and inhibits the inactivation of the activated channels, thereby blocking neuronal transmission. The polypeptide is Neurotoxin II.22.5 (Centruroides tecomanus (Scorpion)).